Reading from the N-terminus, the 49-residue chain is Protein OPG059 (49 aa).

Residue methionine 1 is a topological domain, virion surface. A helical transmembrane segment spans residues 2 to 22; the sequence is VIGLVIFVSVAATIVGVLSNV. Residues 23-49 are Intravirion-facing; that stretch reads LDMIMYVEENNEEDAKIKEEQELLLLY.

Belongs to the orthopoxvirus OPG059 family.

The protein resides in the virion membrane. Its subcellular location is the host membrane. May play a role in cell adhesion and is important for virus virulence in vivo, although it is not required for the virus life cycle in cell cultures. In Cynomys gunnisoni (Gunnison's prairie dog), this protein is Protein OPG059 (OPG059).